The following is a 205-amino-acid chain: Protein MIS12 homolog (205 aa).

Residues 108–205 (PYSEEDFQHL…EKESKRLKIS (98 aa)) are a coiled coil.

The protein belongs to the mis12 family. As to quaternary structure, component of the MIS12 complex composed of MIS12, DSN1, NSL1 and PMF1. Also interacts with KNL1, CBX3, CBX5, NDC80 and ZWINT.

It localises to the chromosome. The protein localises to the centromere. The protein resides in the kinetochore. Functionally, part of the MIS12 complex which is required for normal chromosome alignment and segregation and for kinetochore formation during mitosis. Essential for proper kinetochore microtubule attachments. In Homo sapiens (Human), this protein is Protein MIS12 homolog.